Reading from the N-terminus, the 329-residue chain is Diaminopimelate epimerase (329 aa).

The substrate site is built by N14 and N73. Residue C82 is the Proton donor of the active site. Substrate contacts are provided by residues 83-84 (GN), N170, N206, and 224-225 (ER). C233 functions as the Proton acceptor in the catalytic mechanism. 234 to 235 (GT) contributes to the substrate binding site.

It belongs to the diaminopimelate epimerase family. In terms of assembly, homodimer.

The protein resides in the cytoplasm. It catalyses the reaction (2S,6S)-2,6-diaminopimelate = meso-2,6-diaminopimelate. It participates in amino-acid biosynthesis; L-lysine biosynthesis via DAP pathway; DL-2,6-diaminopimelate from LL-2,6-diaminopimelate: step 1/1. In terms of biological role, catalyzes the stereoinversion of LL-2,6-diaminopimelate (L,L-DAP) to meso-diaminopimelate (meso-DAP), a precursor of L-lysine and an essential component of the bacterial peptidoglycan. The protein is Diaminopimelate epimerase of Listeria innocua serovar 6a (strain ATCC BAA-680 / CLIP 11262).